The sequence spans 206 residues: Ribosomal RNA large subunit methyltransferase E (206 aa).

Gly61, Trp63, Asp81, Asp97, and Asp122 together coordinate S-adenosyl-L-methionine. Lys162 (proton acceptor) is an active-site residue.

It belongs to the class I-like SAM-binding methyltransferase superfamily. RNA methyltransferase RlmE family.

It localises to the cytoplasm. The enzyme catalyses uridine(2552) in 23S rRNA + S-adenosyl-L-methionine = 2'-O-methyluridine(2552) in 23S rRNA + S-adenosyl-L-homocysteine + H(+). Its function is as follows. Specifically methylates the uridine in position 2552 of 23S rRNA at the 2'-O position of the ribose in the fully assembled 50S ribosomal subunit. The sequence is that of Ribosomal RNA large subunit methyltransferase E from Neisseria gonorrhoeae (strain NCCP11945).